We begin with the raw amino-acid sequence, 275 residues long: 4-hydroxy-tetrahydrodipicolinate reductase (275 aa).

NAD(+)-binding positions include 13 to 18 (GAAGKM), 108 to 110 (GTT), and 134 to 137 (VPNF). H164 (proton donor/acceptor) is an active-site residue. H165 contacts (S)-2,3,4,5-tetrahydrodipicolinate. Catalysis depends on K168, which acts as the Proton donor. 174-175 (GT) is a (S)-2,3,4,5-tetrahydrodipicolinate binding site.

The protein belongs to the DapB family.

It localises to the cytoplasm. It carries out the reaction (S)-2,3,4,5-tetrahydrodipicolinate + NAD(+) + H2O = (2S,4S)-4-hydroxy-2,3,4,5-tetrahydrodipicolinate + NADH + H(+). It catalyses the reaction (S)-2,3,4,5-tetrahydrodipicolinate + NADP(+) + H2O = (2S,4S)-4-hydroxy-2,3,4,5-tetrahydrodipicolinate + NADPH + H(+). Its pathway is amino-acid biosynthesis; L-lysine biosynthesis via DAP pathway; (S)-tetrahydrodipicolinate from L-aspartate: step 4/4. Functionally, catalyzes the conversion of 4-hydroxy-tetrahydrodipicolinate (HTPA) to tetrahydrodipicolinate. This chain is 4-hydroxy-tetrahydrodipicolinate reductase, found in Gloeothece citriformis (strain PCC 7424) (Cyanothece sp. (strain PCC 7424)).